The sequence spans 131 residues: D-ribose pyranase (131 aa).

His20 (proton donor) is an active-site residue. Substrate-binding positions include Asp28, His98, and 120–122 (YSN).

This sequence belongs to the RbsD / FucU family. RbsD subfamily. Homodecamer.

The protein localises to the cytoplasm. It carries out the reaction beta-D-ribopyranose = beta-D-ribofuranose. It functions in the pathway carbohydrate metabolism; D-ribose degradation; D-ribose 5-phosphate from beta-D-ribopyranose: step 1/2. Catalyzes the interconversion of beta-pyran and beta-furan forms of D-ribose. This chain is D-ribose pyranase, found in Latilactobacillus sakei subsp. sakei (strain 23K) (Lactobacillus sakei subsp. sakei).